A 360-amino-acid chain; its full sequence is Phenylalanine--tRNA ligase alpha subunit (360 aa).

Glutamate 260 is a binding site for Mg(2+).

It belongs to the class-II aminoacyl-tRNA synthetase family. Phe-tRNA synthetase alpha subunit type 1 subfamily. Tetramer of two alpha and two beta subunits. Mg(2+) serves as cofactor.

It is found in the cytoplasm. The enzyme catalyses tRNA(Phe) + L-phenylalanine + ATP = L-phenylalanyl-tRNA(Phe) + AMP + diphosphate + H(+). The polypeptide is Phenylalanine--tRNA ligase alpha subunit (Afipia carboxidovorans (strain ATCC 49405 / DSM 1227 / KCTC 32145 / OM5) (Oligotropha carboxidovorans)).